Here is a 278-residue protein sequence, read N- to C-terminus: Release factor glutamine methyltransferase (278 aa).

Residues 120–124 (GTGTG), Asp143, and Asn184 each bind S-adenosyl-L-methionine. 184 to 187 (NPPY) serves as a coordination point for substrate.

It belongs to the protein N5-glutamine methyltransferase family. PrmC subfamily.

It carries out the reaction L-glutaminyl-[peptide chain release factor] + S-adenosyl-L-methionine = N(5)-methyl-L-glutaminyl-[peptide chain release factor] + S-adenosyl-L-homocysteine + H(+). In terms of biological role, methylates the class 1 translation termination release factors RF1/PrfA and RF2/PrfB on the glutamine residue of the universally conserved GGQ motif. This is Release factor glutamine methyltransferase from Deinococcus radiodurans (strain ATCC 13939 / DSM 20539 / JCM 16871 / CCUG 27074 / LMG 4051 / NBRC 15346 / NCIMB 9279 / VKM B-1422 / R1).